Consider the following 1399-residue polypeptide: Alpha-glucan water dikinase 1, chloroplastic (1399 aa).

A chloroplast-targeting transit peptide spans 1–75 (MSNSVVHNLL…GRPLSFVPRA (75 aa)). An N-acetylvaline modification is found at Val76. Residues 265-306 (LLKKDNSNESPKSNGTSSSGREEKKKVSKQPERKKNYNTDKI) are disordered. Over residues 272 to 283 (NESPKSNGTSSS) the composition is skewed to polar residues. The segment covering 284–306 (GREEKKKVSKQPERKKNYNTDKI) has biased composition (basic and acidic residues). His1004 serves as the catalytic Tele-phosphohistidine intermediate.

Belongs to the PEP-utilizing enzyme family. In terms of assembly, homodimer. It depends on Mg(2+) as a cofactor.

The protein localises to the plastid. The protein resides in the chloroplast. It carries out the reaction [(1-&gt;4)-alpha-D-glucosyl](n) + n ATP + n H2O = [(1-&gt;4)-6-phospho-alpha-D-glucosyl](n) + n AMP + n phosphate + 2n H(+). Its function is as follows. Mediates the incorporation of phosphate into starch-like alpha-glucan, mostly at the C-6 position of glucose units. Acts as an overall regulator of starch mobilization. Required for starch degradation, suggesting that the phosphate content of starch regulates its degradability. The chain is Alpha-glucan water dikinase 1, chloroplastic from Arabidopsis thaliana (Mouse-ear cress).